The chain runs to 864 residues: Leucine--tRNA ligase (864 aa).

The short motif at 42–52 (PYPSGKLHMGH) is the 'HIGH' region element. Positions 624–628 (KMSKS) match the 'KMSKS' region motif. Residue Lys627 participates in ATP binding.

It belongs to the class-I aminoacyl-tRNA synthetase family.

It is found in the cytoplasm. It carries out the reaction tRNA(Leu) + L-leucine + ATP = L-leucyl-tRNA(Leu) + AMP + diphosphate. The protein is Leucine--tRNA ligase of Burkholderia lata (strain ATCC 17760 / DSM 23089 / LMG 22485 / NCIMB 9086 / R18194 / 383).